A 224-amino-acid chain; its full sequence is Ribosomal RNA small subunit methyltransferase G (224 aa).

S-adenosyl-L-methionine is bound by residues G69, L74, 119–120 (AE), and R137.

It belongs to the methyltransferase superfamily. RNA methyltransferase RsmG family.

Its subcellular location is the cytoplasm. Its function is as follows. Specifically methylates the N7 position of guanine in position 518 of 16S rRNA. The chain is Ribosomal RNA small subunit methyltransferase G from Mycobacterium bovis (strain ATCC BAA-935 / AF2122/97).